A 76-amino-acid chain; its full sequence is ATP synthase subunit c (76 aa).

2 consecutive transmembrane segments (helical) span residues 13–33 (LSVI…GILF) and 55–75 (FIGL…ALII).

Belongs to the ATPase C chain family. F-type ATPases have 2 components, F(1) - the catalytic core - and F(0) - the membrane proton channel. F(1) has five subunits: alpha(3), beta(3), gamma(1), delta(1), epsilon(1). F(0) has three main subunits: a(1), b(2) and c(10-14). The alpha and beta chains form an alternating ring which encloses part of the gamma chain. F(1) is attached to F(0) by a central stalk formed by the gamma and epsilon chains, while a peripheral stalk is formed by the delta and b chains.

The protein resides in the cell membrane. F(1)F(0) ATP synthase produces ATP from ADP in the presence of a proton or sodium gradient. F-type ATPases consist of two structural domains, F(1) containing the extramembraneous catalytic core and F(0) containing the membrane proton channel, linked together by a central stalk and a peripheral stalk. During catalysis, ATP synthesis in the catalytic domain of F(1) is coupled via a rotary mechanism of the central stalk subunits to proton translocation. In terms of biological role, key component of the F(0) channel; it plays a direct role in translocation across the membrane. A homomeric c-ring of between 10-14 subunits forms the central stalk rotor element with the F(1) delta and epsilon subunits. The chain is ATP synthase subunit c from Bifidobacterium longum subsp. infantis (strain ATCC 15697 / DSM 20088 / JCM 1222 / NCTC 11817 / S12).